Here is a 68-residue protein sequence, read N- to C-terminus: Purkinje cell protein 4-like protein 1 (68 aa).

Polar residues predominate over residues 1-16 (MSELNTKTSPATNQAA). The interval 1-45 (MSELNTKTSPATNQAAGQEEKGKAGNVKKAEEEEEIDIDLTAPET) is disordered. Thr-8 is modified (phosphothreonine). Over residues 18 to 31 (QEEKGKAGNVKKAE) the composition is skewed to basic and acidic residues. Residues 45–68 (TEKAALAIQGKFRRFQKRKKDPSS) enclose the IQ domain.

Belongs to the PCP4 family.

The chain is Purkinje cell protein 4-like protein 1 (PCP4L1) from Homo sapiens (Human).